The sequence spans 388 residues: Flavin-dependent monooxygenase (388 aa).

An NADPH-binding site is contributed by Arg-54. FAD is bound by residues Asp-61, Arg-117, and Asp-311.

It belongs to the aromatic-ring hydroxylase family. TetX subfamily. Monomer. The cofactor is FAD.

It localises to the cytoplasm. The enzyme catalyses a tetracycline + NADPH + O2 + H(+) = an 11a-hydroxytetracycline + NADP(+) + H2O. The catalysed reaction is tetracycline + NADPH + O2 + H(+) = 11a-hydroxytetracycline + NADP(+) + H2O. It catalyses the reaction oxytetracycline + NADPH + O2 + H(+) = 11a-hydroxy-oxytetracycline + NADP(+) + H2O. Functionally, an FAD-requiring monooxygenase active on some tetracycline antibiotic derivatives, which leads to their inactivation. Hydroxylates carbon 11a of tetracycline and some analogs. Its function is as follows. Confers resistance to tetracycline via an oxidoreductase activity; NADPH is more active than NAD. Expression in E.coli leads to breakdown of tetracycline. Confers resistance to doxycycline, chlortetracycline, oxytetracycline and minocycline. The polypeptide is Flavin-dependent monooxygenase (Bacteroides fragilis).